We begin with the raw amino-acid sequence, 364 residues long: Ribosomal RNA small subunit methyltransferase H (364 aa).

S-adenosyl-L-methionine-binding positions include 55 to 57 (GGH), Asp-75, Phe-101, Asp-122, and Gln-129. Positions 333–364 (LPPGGGAGFVKAGRVPGEPVRGTRAGSKGRRR) are disordered.

It belongs to the methyltransferase superfamily. RsmH family.

The protein resides in the cytoplasm. The catalysed reaction is cytidine(1402) in 16S rRNA + S-adenosyl-L-methionine = N(4)-methylcytidine(1402) in 16S rRNA + S-adenosyl-L-homocysteine + H(+). Functionally, specifically methylates the N4 position of cytidine in position 1402 (C1402) of 16S rRNA. In Bordetella bronchiseptica (strain ATCC BAA-588 / NCTC 13252 / RB50) (Alcaligenes bronchisepticus), this protein is Ribosomal RNA small subunit methyltransferase H.